The chain runs to 220 residues: uncharacterized protein (220 aa).

This is an uncharacterized protein from Methanocaldococcus jannaschii (strain ATCC 43067 / DSM 2661 / JAL-1 / JCM 10045 / NBRC 100440) (Methanococcus jannaschii).